The chain runs to 438 residues: Putative metabolite transport protein HI_0281 (438 aa).

The Cytoplasmic segment spans residues 1–17 (MSTQLRNNPMKVALASM). Residues 18–38 (VGTAIEFFDYYIYAAAAVLVF) traverse the membrane as a helical segment. At 39–52 (NTQFFHSDDPLSND) the chain is on the periplasmic side. Residues 53-73 (LLSLSTLALAFFARPIGSALF) form a helical membrane-spanning segment. The Cytoplasmic segment spans residues 74–85 (GHFGDKIGRKKT). A helical membrane pass occupies residues 86–106 (LVASLVLMGGSTVVIGLLPNY). Over 107–115 (AQIGIWAPI) the chain is Periplasmic. Residues 116–136 (LLCVCRVGQGIGLGGEWGGAA) traverse the membrane as a helical segment. At 137 to 156 (LVATENAPEGKRAWYGTFPQ) the chain is on the cytoplasmic side. A helical membrane pass occupies residues 157–177 (LGAPIGLFVANGTFFLVSYLL). The Periplasmic segment spans residues 178–181 (GHNA). The helical transmembrane segment at 182-202 (LVEWAWRIPFVSSILLVAVGL) threads the bilayer. Topologically, residues 203-239 (YVRLTLHESHVFVEAEQKGKKLNAPVSVVFTKHLKPM) are cytoplasmic. Residues 240–260 (VIGTFIMVATYSLFYIMTAFA) traverse the membrane as a helical segment. The Periplasmic segment spans residues 261-286 (QAYSRTAPKLSEAGYALGLGIPANTF). The helical transmembrane segment at 287 to 307 (TGLLLISAIVFGIFISISGFY) threads the bilayer. At 308–314 (ADKIGRR) the chain is on the cytoplasmic side. A helical membrane pass occupies residues 315–336 (KWLIWVTIAIGVLGLAMPLFLE). At 337–342 (NGTPVS) the chain is on the periplasmic side. A helical transmembrane segment spans residues 343–363 (VFAFLVIGMAIMGMTFGPMAA). The Cytoplasmic portion of the chain corresponds to 364–377 (LLPELFPTEVRYSG). Residues 378-398 (ASLAYNLASIIGATIAAMISL) form a helical membrane-spanning segment. The Periplasmic portion of the chain corresponds to 399 to 405 (KINASFG). The chain crosses the membrane as a helical span at residues 406–426 (VMGVGIYLAINALMTFLALLA). Residues 427-438 (SKETKNVDLTEI) are Cytoplasmic-facing.

The protein belongs to the major facilitator superfamily. Sugar transporter (TC 2.A.1.1) family.

It is found in the cell inner membrane. This chain is Putative metabolite transport protein HI_0281, found in Haemophilus influenzae (strain ATCC 51907 / DSM 11121 / KW20 / Rd).